A 387-amino-acid chain; its full sequence is ATP phosphoribosyltransferase regulatory subunit (387 aa).

Belongs to the class-II aminoacyl-tRNA synthetase family. HisZ subfamily. In terms of assembly, heteromultimer composed of HisG and HisZ subunits.

The protein resides in the cytoplasm. It participates in amino-acid biosynthesis; L-histidine biosynthesis; L-histidine from 5-phospho-alpha-D-ribose 1-diphosphate: step 1/9. Its function is as follows. Required for the first step of histidine biosynthesis. May allow the feedback regulation of ATP phosphoribosyltransferase activity by histidine. In Polynucleobacter necessarius subsp. necessarius (strain STIR1), this protein is ATP phosphoribosyltransferase regulatory subunit.